We begin with the raw amino-acid sequence, 264 residues long: Small ribosomal subunit protein uS2 (264 aa).

This sequence belongs to the universal ribosomal protein uS2 family.

The sequence is that of Small ribosomal subunit protein uS2 from Helicobacter pylori (strain Shi470).